Here is a 144-residue protein sequence, read N- to C-terminus: Large ribosomal subunit protein uL15 (144 aa).

The tract at residues Met1–Gly52 is disordered.

It belongs to the universal ribosomal protein uL15 family. In terms of assembly, part of the 50S ribosomal subunit.

Binds to the 23S rRNA. The protein is Large ribosomal subunit protein uL15 of Actinobacillus pleuropneumoniae serotype 7 (strain AP76).